The sequence spans 86 residues: Neurotoxin-like protein pMD18-NTL1/2/4/5 (86 aa).

The signal sequence occupies residues 1 to 21; the sequence is MKTLLLTLVVLTIACLDLGYT. Disulfide bonds link cysteine 24/cysteine 45, cysteine 38/cysteine 62, cysteine 66/cysteine 78, and cysteine 79/cysteine 84.

Belongs to the three-finger toxin family. Short-chain subfamily. Orphan group IX sub-subfamily. Expressed by the venom gland.

The protein resides in the secreted. The chain is Neurotoxin-like protein pMD18-NTL1/2/4/5 from Bungarus multicinctus (Many-banded krait).